The sequence spans 214 residues: Coiled-coil domain-containing protein 169 (214 aa).

The stretch at 56 to 138 (SEWKTRYETQ…YAFRLEQESK (83 aa)) forms a coiled coil. Residues 154-214 (MTQVSGSNQV…RSNHLPKLNP (61 aa)) form a disordered region. Polar residues-rich tracts occupy residues 155–166 (TQVSGSNQVSKR) and 185–195 (HNSMNQKTTNA).

This sequence belongs to the CCDC169 family.

The protein is Coiled-coil domain-containing protein 169 (Ccdc169) of Mus musculus (Mouse).